The sequence spans 656 residues: uncharacterized protein (656 aa).

This is an uncharacterized protein from Rickettsia prowazekii (strain Madrid E).